The sequence spans 594 residues: MDVRRRPVKSLSSAKTATAGEPPKSQQQHPKASDALPLPLYLTNGLFFTMFFSVMYFLLHRWREKIRNSTPLHVVTLSELAALVLLMASVIYLLGFFGIGFVRSVIRPSPDAWDILEDDNAINEEDSRREPCAEAIDCSLPPKPKIVHMVPQKALNPKSAFADMMVEQPALAIAPLTEEDEEIVKSVVTGKIPSYSLESKLGDCKKAASIRREALQRITGKSLAGLPLDGFDYKSILGQCCEMPVGYVQIPVGIAGPLLLNETEYSVPMATTEGCLVASTNRGCKAIYASGGATSVLLRDGMTRAPVVRFSTVKRAAELKFFLEEPLNYDTPAHVFNKSSRFGRLQGIKCAVAGKNLYIRFTCSTGDAMGMNMVSKGVQNVLDFLQSDFPDMDVMGISGNYCSDKKPAAVNWIEGCGKSVVCEAIIKEEVVKKVLKTNVAALVELNMLKNLAGSAVAGALGGFNAHASNIVSAVYISTGQDPAQNVESSHCITMMEAVNNGKDLHISVTMPSIEVGTVGGGTQLASQSACLNLLGVKGASKESPGSNSRLLASIVAGSVLAGELSLMSALAAGQLVKSHMKYNRSSKDITKLSS.

The interval 1-32 (MDVRRRPVKSLSSAKTATAGEPPKSQQQHPKA) is disordered. Topologically, residues 1-37 (MDVRRRPVKSLSSAKTATAGEPPKSQQQHPKASDALP) are lumenal. A helical transmembrane segment spans residues 38 to 58 (LPLYLTNGLFFTMFFSVMYFL). The Cytoplasmic portion of the chain corresponds to 59 to 81 (LHRWREKIRNSTPLHVVTLSELA). A helical transmembrane segment spans residues 82 to 102 (ALVLLMASVIYLLGFFGIGFV). Residues 103–549 (RSVIRPSPDA…SKESPGSNSR (447 aa)) are Lumenal-facing. Asn261 carries an N-linked (GlcNAc...) asparagine glycan. Glu273 serves as the catalytic Charge relay system. Asn337 carries an N-linked (GlcNAc...) asparagine glycan. Catalysis depends on charge relay system residues Lys405 and Asp481. Residues 550 to 570 (LLASIVAGSVLAGELSLMSAL) form a helical membrane-spanning segment. Residues 571-594 (AAGQLVKSHMKYNRSSKDITKLSS) are Cytoplasmic-facing. The active-site Proton donor is the His579.

It belongs to the HMG-CoA reductase family. As to expression, mostly expressed in the petioles of seedlings, seedlings and roots, and, to a lower extent, in seeds, leaves, stems and flowers.

Its subcellular location is the endoplasmic reticulum membrane. It is found in the plastid. The protein resides in the chloroplast membrane. The protein localises to the peroxisome membrane. The catalysed reaction is (R)-mevalonate + 2 NADP(+) + CoA = (3S)-3-hydroxy-3-methylglutaryl-CoA + 2 NADPH + 2 H(+). Its pathway is metabolic intermediate biosynthesis; (R)-mevalonate biosynthesis; (R)-mevalonate from acetyl-CoA: step 3/3. Competitive inhibition by mevinolin (Mev) is leading to a significant reduction of total ginsenoside in adventitious roots. Triggered by darkness. Its function is as follows. Catalyzes the synthesis of mevalonate, the specific precursor of all isoprenoid compounds present in plants. Component of the triterpene saponins (e.g. ginsenosides or panaxosides) and phytosterols biosynthetic pathways. This is 3-hydroxy-3-methylglutaryl coenzyme A reductase 2-A from Panax ginseng (Korean ginseng).